A 277-amino-acid polypeptide reads, in one-letter code: Phosphoribosylaminoimidazole-succinocarboxamide synthase (277 aa).

Belongs to the SAICAR synthetase family.

It catalyses the reaction 5-amino-1-(5-phospho-D-ribosyl)imidazole-4-carboxylate + L-aspartate + ATP = (2S)-2-[5-amino-1-(5-phospho-beta-D-ribosyl)imidazole-4-carboxamido]succinate + ADP + phosphate + 2 H(+). It functions in the pathway purine metabolism; IMP biosynthesis via de novo pathway; 5-amino-1-(5-phospho-D-ribosyl)imidazole-4-carboxamide from 5-amino-1-(5-phospho-D-ribosyl)imidazole-4-carboxylate: step 1/2. This Salinispora tropica (strain ATCC BAA-916 / DSM 44818 / JCM 13857 / NBRC 105044 / CNB-440) protein is Phosphoribosylaminoimidazole-succinocarboxamide synthase.